The primary structure comprises 167 residues: Mediator of RNA polymerase II transcription subunit 10 (167 aa).

Residues leucine 53–isoleucine 88 are disordered.

Belongs to the Mediator complex subunit 10 family. In terms of assembly, component of the Mediator complex.

It is found in the nucleus. In terms of biological role, component of the Mediator complex, a coactivator involved in the regulated transcription of nearly all RNA polymerase II-dependent genes. Mediator functions as a bridge to convey information from gene-specific regulatory proteins to the basal RNA polymerase II transcription machinery. Mediator is recruited to promoters by direct interactions with regulatory proteins and serves as a scaffold for the assembly of a functional preinitiation complex with RNA polymerase II and the general transcription factors. The protein is Mediator of RNA polymerase II transcription subunit 10 (nut2) of Neosartorya fischeri (strain ATCC 1020 / DSM 3700 / CBS 544.65 / FGSC A1164 / JCM 1740 / NRRL 181 / WB 181) (Aspergillus fischerianus).